Reading from the N-terminus, the 446-residue chain is Coagulation factor VII (446 aa).

The signal sequence occupies residues 1–24 (MVPQTHGLLLLYFLLQLQGPLGAV). Residues 25-41 (VFITQEEAHGVLHRQRR) constitute a propeptide that is removed on maturation. Residues 42 to 86 (ANSLLEELWSSSLERECNEERCSFEEAREIFKSPERTKQFWTIYS) form the Gla domain. A 4-carboxyglutamate mark is found at glutamate 47, glutamate 48, glutamate 55, glutamate 57, glutamate 60, glutamate 61, glutamate 66, glutamate 67, glutamate 70, and glutamate 76. Cysteines 58 and 63 form a disulfide. Residues 87 to 123 (DGDQCASNPCQNGGTCQDHLKSYVCFCPLDFEGRNCE) form the EGF-like 1; calcium-binding domain. Cystine bridges form between cysteine 91-cysteine 102, cysteine 96-cysteine 111, cysteine 113-cysteine 122, cysteine 132-cysteine 143, cysteine 139-cysteine 153, cysteine 155-cysteine 168, cysteine 176-cysteine 303, cysteine 200-cysteine 205, cysteine 219-cysteine 235, and cysteine 351-cysteine 370. Serine 93 carries an O-linked (Glc...) serine; alternate glycan. Serine 93 carries an O-linked (Xyl...) serine; alternate glycan. The O-linked (Fuc) threonine glycan is linked to threonine 101. Aspartate 104 carries the (3R)-3-hydroxyaspartate modification. The 42-residue stretch at 128 to 169 (EQLICANENGDCDQYCRDHVGTKRTCSCHEDYVLQPDEVSCK) folds into the EGF-like 2 domain. Residue asparagine 186 is glycosylated (N-linked (GlcNAc...) asparagine). In terms of domain architecture, Peptidase S1 spans 194 to 433 (IVGGYVCPKG…YIDWLVKYMD (240 aa)). Histidine 234 functions as the Charge relay system in the catalytic mechanism. N-linked (GlcNAc...) asparagine glycosylation occurs at asparagine 244. The Charge relay system role is filled by aspartate 283. Aspartate 379 is a substrate binding site. Cysteine 381 and cysteine 409 are disulfide-bonded. Serine 385 acts as the Charge relay system in catalysis.

It belongs to the peptidase S1 family. In terms of assembly, heterodimer of a light chain and a heavy chain linked by a disulfide bond. The vitamin K-dependent, enzymatic carboxylation of some glutamate residues allows the modified protein to bind calcium. Post-translationally, the iron and 2-oxoglutarate dependent 3-hydroxylation of aspartate and asparagine is (R) stereospecific within EGF domains. In terms of processing, can be either O-glucosylated or O-xylosylated at Ser-93 by POGLUT1. As to expression, plasma.

Its subcellular location is the secreted. The catalysed reaction is Selective cleavage of Arg-|-Ile bond in factor X to form factor Xa.. Initiates the extrinsic pathway of blood coagulation. Serine protease that circulates in the blood in a zymogen form. Factor VII is converted to factor VIIa by factor Xa, factor XIIa, factor IXa, or thrombin by minor proteolysis. In the presence of tissue factor and calcium ions, factor VIIa then converts factor X to factor Xa by limited proteolysis. Factor VIIa also converts factor IX to factor IXa in the presence of tissue factor and calcium. The chain is Coagulation factor VII (F7) from Rattus norvegicus (Rat).